Here is a 390-residue protein sequence, read N- to C-terminus: Coiled-coil domain-containing protein 85C (390 aa).

Coiled-coil stretches lie at residues 26-86 (KEEL…RELC) and 116-146 (KEVGTYQQKLKELEAKQESLVRDNLELKEII). A disordered region spans residues 153–237 (RNGPGSRSSI…RSIPNGLNDS (85 aa)). Over residues 157–172 (GSRSSIDSQNSLTNLN) the composition is skewed to polar residues. The segment covering 182–194 (DGSSTSSTGSAGS) has biased composition (low complexity).

This sequence belongs to the CCDC85 family.

It localises to the cell junction. It is found in the tight junction. Its subcellular location is the adherens junction. Its function is as follows. May play a role in cell-cell adhesion and epithelium development. May play an important role in cortical development, especially in the maintenance of radial glia. In Xenopus laevis (African clawed frog), this protein is Coiled-coil domain-containing protein 85C (ccdc85c).